Here is a 339-residue protein sequence, read N- to C-terminus: MTQEREKAIELALSQIEKQFGKGAIMRLGADEALPDIDAIPTGALSLDIALGVGGVPRGRVIEIYGPESSGKTTLALHIAAEAQKLGGIAAFVDAEHALDIGYARKLGVRTDDLLVSQPDTGEQALEIAEMLVRSGAVDVLVIDSVAALVPKAEIEGEMGDSHVGLQARLMSQALRKLTGIISKSNCCVIFINQIRMKIGVMFGSPETTTGGNALKFYASVRLDIRKIATLKQGDAVIGSRTKVKVVKNKVAPPFREVEFDIYYGEGISRLGDLLDLAVDRKIIDKSGAWFSYGSDRIGQGRENSRNFLKEHPEMVAEIEDKIYETAGIPRKGGKEEAA.

Residue 66-73 participates in ATP binding; that stretch reads GPESSGKT.

This sequence belongs to the RecA family.

It localises to the cytoplasm. Can catalyze the hydrolysis of ATP in the presence of single-stranded DNA, the ATP-dependent uptake of single-stranded DNA by duplex DNA, and the ATP-dependent hybridization of homologous single-stranded DNAs. It interacts with LexA causing its activation and leading to its autocatalytic cleavage. This Geobacter metallireducens (strain ATCC 53774 / DSM 7210 / GS-15) protein is Protein RecA.